The following is a 392-amino-acid chain: Formate-dependent phosphoribosylglycinamide formyltransferase (392 aa).

Residues 22-23 (EL) and E82 contribute to the N(1)-(5-phospho-beta-D-ribosyl)glycinamide site. ATP contacts are provided by residues R114, K155, 160-165 (SSGKGQ), 195-198 (EGLV), and E203. The ATP-grasp domain maps to 119–308 (RLAAETLSLP…EFALHVRAFL (190 aa)). Mg(2+)-binding residues include E267 and E279. N(1)-(5-phospho-beta-D-ribosyl)glycinamide contacts are provided by residues D286, K355, and 362–363 (RR).

This sequence belongs to the PurK/PurT family. As to quaternary structure, homodimer.

The catalysed reaction is N(1)-(5-phospho-beta-D-ribosyl)glycinamide + formate + ATP = N(2)-formyl-N(1)-(5-phospho-beta-D-ribosyl)glycinamide + ADP + phosphate + H(+). The protein operates within purine metabolism; IMP biosynthesis via de novo pathway; N(2)-formyl-N(1)-(5-phospho-D-ribosyl)glycinamide from N(1)-(5-phospho-D-ribosyl)glycinamide (formate route): step 1/1. In terms of biological role, involved in the de novo purine biosynthesis. Catalyzes the transfer of formate to 5-phospho-ribosyl-glycinamide (GAR), producing 5-phospho-ribosyl-N-formylglycinamide (FGAR). Formate is provided by PurU via hydrolysis of 10-formyl-tetrahydrofolate. In Sodalis glossinidius (strain morsitans), this protein is Formate-dependent phosphoribosylglycinamide formyltransferase.